A 421-amino-acid polypeptide reads, in one-letter code: U-box domain-containing protein 25 (421 aa).

The U-box domain maps to 13–88 (QIPYHFRCPI…QEWCVANRSN (76 aa)).

The catalysed reaction is S-ubiquitinyl-[E2 ubiquitin-conjugating enzyme]-L-cysteine + [acceptor protein]-L-lysine = [E2 ubiquitin-conjugating enzyme]-L-cysteine + N(6)-ubiquitinyl-[acceptor protein]-L-lysine.. The protein operates within protein modification; protein ubiquitination. Functions as an E3 ubiquitin ligase. The polypeptide is U-box domain-containing protein 25 (PUB25) (Arabidopsis thaliana (Mouse-ear cress)).